We begin with the raw amino-acid sequence, 332 residues long: L-lactate dehydrogenase A chain (332 aa).

Residue A2 is modified to N-acetylalanine. The residue at position 5 (K5) is an N6-acetyllysine; alternate. At K5 the chain carries N6-succinyllysine; alternate. The residue at position 14 (K14) is an N6-acetyllysine. G29–K57 lines the NAD(+) pocket. An N6-acetyllysine; alternate modification is found at K57. A Glycyl lysine isopeptide (Lys-Gly) (interchain with G-Cter in SUMO2); alternate cross-link involves residue K57. K81 is subject to N6-acetyllysine. NAD(+) is bound at residue R99. Residue R106 coordinates substrate. The residue at position 118 (K118) is an N6-acetyllysine; alternate. The residue at position 118 (K118) is an N6-succinyllysine; alternate. An N6-acetyllysine modification is found at K126. N138 provides a ligand contact to NAD(+). The substrate site is built by N138 and R169. H193 acts as the Proton acceptor in catalysis. Residues K224 and K232 each carry the N6-acetyllysine modification. Y239 bears the Phosphotyrosine mark. K243 is subject to N6-acetyllysine. Residue T248 coordinates substrate. Position 309 is a phosphothreonine (T309). Position 318 is an N6-acetyllysine; alternate (K318). N6-succinyllysine; alternate is present on K318. A Phosphothreonine modification is found at T322.

It belongs to the LDH/MDH superfamily. LDH family. Homotetramer. Interacts with PTEN upstream reading frame protein MP31. ISGylated.

The protein localises to the cytoplasm. It catalyses the reaction (S)-lactate + NAD(+) = pyruvate + NADH + H(+). It functions in the pathway fermentation; pyruvate fermentation to lactate; (S)-lactate from pyruvate: step 1/1. Interconverts simultaneously and stereospecifically pyruvate and lactate with concomitant interconversion of NADH and NAD(+). The sequence is that of L-lactate dehydrogenase A chain (Ldha) from Mus musculus (Mouse).